The chain runs to 370 residues: MASRKLLLLPGDGIGPEAMAEVRKVIAFLNSDLNLGFETEEGLVGGCAYDAHGQAISDADMEKALAADAVLFGAVGGPKWDSVPYEVRPEAGLLRLRKDMQLYANLRPAICYPALAHSSSLKPEVIEGLDILILRELTGGVYFGEPKEIIDLGNGQKRGIDTQVYDTYEIERIADVAFELARTRRNKVTSMEKRNVMKSGVLWNQVVTARHKEKHADVQLEHMLADAGGMQLVRWPKQFDVILTDNLFGDLLSDVAAMLTGSLGMLPSASLGAADSKTGKRKALYEPVHGSAPDIAGKGIANPIAMIASLAMCLRYSFGLVAEADRLEAAIAGVLDDGIRTADIWSEGNTKVGTTEMGDAILAKFKALSA.

77–90 contacts NAD(+); the sequence is GPKWDSVPYEVRPE. Substrate-binding residues include Arg-97, Arg-107, Arg-135, and Asp-226. Mg(2+) is bound by residues Asp-226, Asp-250, and Asp-254. An NAD(+)-binding site is contributed by 290–302; that stretch reads GSAPDIAGKGIAN.

This sequence belongs to the isocitrate and isopropylmalate dehydrogenases family. LeuB type 1 subfamily. In terms of assembly, homodimer. Mg(2+) serves as cofactor. Mn(2+) is required as a cofactor.

It localises to the cytoplasm. The enzyme catalyses (2R,3S)-3-isopropylmalate + NAD(+) = 4-methyl-2-oxopentanoate + CO2 + NADH. It participates in amino-acid biosynthesis; L-leucine biosynthesis; L-leucine from 3-methyl-2-oxobutanoate: step 3/4. Catalyzes the oxidation of 3-carboxy-2-hydroxy-4-methylpentanoate (3-isopropylmalate) to 3-carboxy-4-methyl-2-oxopentanoate. The product decarboxylates to 4-methyl-2 oxopentanoate. This Brucella suis biovar 1 (strain 1330) protein is 3-isopropylmalate dehydrogenase.